A 346-amino-acid polypeptide reads, in one-letter code: [LysW]-lysine/[LysW]-ornithine hydrolase (346 aa).

Residue H68 coordinates Zn(2+). D70 is a catalytic residue. D92 contacts Zn(2+). The active-site Proton acceptor is the E122. Zn(2+)-binding residues include E123, E146, and H317.

Belongs to the peptidase M20A family. LysK subfamily. The cofactor is Zn(2+). It depends on Co(2+) as a cofactor.

It localises to the cytoplasm. The catalysed reaction is [amino-group carrier protein]-C-terminal-gamma-(L-lysyl)-L-glutamate + H2O = [amino-group carrier protein]-C-terminal-L-glutamate + L-lysine. The enzyme catalyses [amino-group carrier protein]-C-terminal-gamma-(L-ornithyl)-L-glutamate + H2O = [amino-group carrier protein]-C-terminal-L-glutamate + L-ornithine. Its pathway is amino-acid biosynthesis; L-lysine biosynthesis via AAA pathway; L-lysine from L-alpha-aminoadipate (Thermus route): step 5/5. It participates in amino-acid biosynthesis; L-arginine biosynthesis. Its function is as follows. Catalyzes the release of L-lysine from [LysW]-gamma-L-lysine and the release of L-ornithine from [LysW]-L-ornithine. The polypeptide is [LysW]-lysine/[LysW]-ornithine hydrolase (Saccharolobus islandicus (strain M.16.27) (Sulfolobus islandicus)).